The sequence spans 285 residues: Proteasome subunit beta (285 aa).

Positions 1-50 (MTAEHPARLPQAFMTPGSSSFVDFLAAHDPSLLPSSRALPAGSAPPAPHG) are cleaved as a propeptide — removed in mature form; by autocatalysis. The Nucleophile role is filled by threonine 51. Positions 266 to 285 (RTRQARSSRSRHGSLGGDLR) are disordered.

Belongs to the peptidase T1B family. As to quaternary structure, the 20S proteasome core is composed of 14 alpha and 14 beta subunits that assemble into four stacked heptameric rings, resulting in a barrel-shaped structure. The two inner rings, each composed of seven catalytic beta subunits, are sandwiched by two outer rings, each composed of seven alpha subunits. The catalytic chamber with the active sites is on the inside of the barrel. Has a gated structure, the ends of the cylinder being occluded by the N-termini of the alpha-subunits. Is capped by the proteasome-associated ATPase, ARC.

It localises to the cytoplasm. It catalyses the reaction Cleavage of peptide bonds with very broad specificity.. It participates in protein degradation; proteasomal Pup-dependent pathway. The formation of the proteasomal ATPase ARC-20S proteasome complex, likely via the docking of the C-termini of ARC into the intersubunit pockets in the alpha-rings, may trigger opening of the gate for substrate entry. Interconversion between the open-gate and close-gate conformations leads to a dynamic regulation of the 20S proteasome proteolysis activity. In terms of biological role, component of the proteasome core, a large protease complex with broad specificity involved in protein degradation. This Sanguibacter keddieii (strain ATCC 51767 / DSM 10542 / NCFB 3025 / ST-74) protein is Proteasome subunit beta.